The primary structure comprises 931 residues: Dual O-methyltransferase/FAD-dependent monooxygenase elcB (931 aa).

An O-methyltransferase region spans residues 1 to 463 (MAASTGLSTV…TTDKARPNGD (463 aa)). Residue Asp254 participates in S-adenosyl-L-methionine binding. The Proton acceptor role is filled by His304. The interval 455 to 474 (TDKARPNGDTTHSGQASIPN) is disordered. The segment covering 462-474 (GDTTHSGQASIPN) has biased composition (polar residues). The interval 464–931 (TTHSGQASIP…TFEELDVAEL (468 aa)) is FAD-dependent monooxygenase. FAD is bound by residues Glu520, Arg604, Asp836, and Ala849.

The protein in the C-terminal section; belongs to the paxM FAD-dependent monooxygenase family. It in the N-terminal section; belongs to the class I-like SAM-binding methyltransferase superfamily. Cation-independent O-methyltransferase family. COMT subfamily.

The catalysed reaction is nor-toralactone + S-adenosyl-L-methionine = toralactone + S-adenosyl-L-homocysteine + H(+). The enzyme catalyses toralactone + NADH + O2 + H(+) = 1-(3,4,5-trihydroxy-7-methoxynaphthalen-2-yl)propan-2-one + CO2 + NAD(+). The protein operates within secondary metabolite biosynthesis. In terms of biological role, dual O-methyltransferase/FAD-dependent monooxygenase; part of the gene cluster that mediates the biosynthesis of elsinochrome C, a perelyenequinone phytotoxin structurally similar to cercosporin. The first step of elsinochrome C biosynthesis is performed by the polyketide synthase elcA which catalyzes the formation of nor-toralactone. The starter unit acyltransferase (SAT) domain of elcA initiates polyketide extension by the selective utilization of acetyl-CoA, which is elongated to the heptaketide in the beta-ketoacyl synthase (KS) domain by successive condensations with six malonyl units introduced by the malonyl acyltransferase (MAT) domain. The product template (PT) domain catalyzes C4-C9 and C2-C11 aldol cyclizations and dehydrations to a trihydroxynaphthalene, which is thought to be delivered to the thioesterase (TE) domain for product release. The bifunctional enzyme elcB then methylates nor-toralactone to toralactone before conducting an unusual oxidative aromatic ring opening. The next step in perylenequinone biosynthesis is an O-methylation at the nascent OH-6 of the elcB product performed by the O-methyltransferase elcD. The oxidative coupling of the two monomeric naphthol units in perylenequinone biosynthesis is catalyzed by the FAD-dependent monooxygenase elcE and the multicopper oxidase elcG. ElcG might catalyze the first intermolecular coupling in a regio- and stereo-selective manner via a phenol radical coupling mechanism and the elcE could forge the second C-C bond intramolecularly via a hydride transfer mechanism. The fasciclin domain-containing protein elcF might also play a role duting this step. The last piece of the puzzle in the biosynthesis of elsinochrome C is the additional annulation by enolate coupling to afford the dihydrobenzo(ghi)perylenequinone system, catalyzed by the FAD-dependent monooxygenase elcH. This is Dual O-methyltransferase/FAD-dependent monooxygenase elcB from Phaeosphaeria nodorum (strain SN15 / ATCC MYA-4574 / FGSC 10173) (Glume blotch fungus).